A 331-amino-acid chain; its full sequence is Olfactory receptor 7D11 (331 aa).

Over 1–25 (MEIENHTLITKFLILGLSDDPELQP) the chain is Extracellular. The N-linked (GlcNAc...) asparagine glycan is linked to Asn-5. The helical transmembrane segment at 26–46 (ILFGLFLSMYLVTLLGNLLII) threads the bilayer. Residues 47 to 57 (LAVSSDSHLHK) are Cytoplasmic-facing. Residues 58–78 (PMYFLLSNLSFIDICFISTTI) form a helical membrane-spanning segment. Over 79-97 (PKMLVNMQSQIKDISYIEC) the chain is Extracellular. Cysteines 97 and 179 form a disulfide. The chain crosses the membrane as a helical span at residues 98–118 (LTQVFFFNIFAGMDNFLLTLM). Residues 119–142 (AYDRFVAICHPLNYTVIMNPRLCA) lie on the Cytoplasmic side of the membrane. A helical transmembrane segment spans residues 143 to 163 (LLILMFWIIMFWVSLIHVLLM). The Extracellular portion of the chain corresponds to 164 to 196 (NELNFSRGTEIPHFFCELAQVLKVSNSDNHVNN). N-linked (GlcNAc...) asparagine glycosylation occurs at Asn-167. A helical transmembrane segment spans residues 197-217 (VFMYVVTSLLGVIPMTGILMS). The Cytoplasmic segment spans residues 218 to 244 (YSQIFSSLFRMSSTVSKYKAFSTCGSH). A helical transmembrane segment spans residues 245–265 (LCVVTLFYGSGFGVYFSSSVV). Residues 266–271 (HSTQRR) lie on the Extracellular side of the membrane. Residues 272–292 (KVASLMYTVISPMLNPFIYTL) form a helical membrane-spanning segment. Topologically, residues 293 to 331 (RNKDVKGALGKLFNRVASSPSCINDIRNKLLLRSVRQIL) are cytoplasmic.

The protein belongs to the G-protein coupled receptor 1 family.

Its subcellular location is the cell membrane. Possible olfactory or taste receptor. The polypeptide is Olfactory receptor 7D11 (Mus musculus (Mouse)).